A 989-amino-acid chain; its full sequence is MESFRQIKNNNVDLISNNDPLDKNRLLIEDLWESVLREECPDDQAERLIQLKELSYSKQMNGDSSKTFKNEIVDIVNSMDLAESIAAARAFSLYFQLVNILEQRVEEDRYIQSFTNKDVQKSHDNLDPFAPALARQNAPVTFRELFYRLRKLNVPPGKLEELLQEMDIRLVFTAHPTEIVRHTIRHKQTRVANLLKKIQIEQFLTKEEKNSLKNQLKEEVRLWWRTDELHQFKPSVLDEVDYALHYFQQVLFNAMPQLRGRIAEALTENYPDVQLPSQSFCNFGSWVGSDRDGNPSVTPEITWRTACYQRQLMLERYIIATSNLRDQLSVSMQWSQVSSSLLESLETDRVKFPEIYEARATRYRSEPYRLKLSYILEKLRLTQERNNLLSDNGWKFDLEGEIDNKNLDKVENLYYKSVNEFTYDLELIKNSLISTGLTCESVNTLLTQVHIFGFSLASLDIRQESTRHSDAIQELTNYLDLTMKYDQMSEEEKIKWLIDELNTKRPLIPSDVNWTKTTEETFSVFKMVKRLQQEFGSRICHSYVISMSHSASDLLEVLLLAKEMGLLDQNSQKSKLLVVPLFETVEDLKRAPEVMERLFKLDFYRSLLPKVGESFKPLQELMLGYSDSNKDSGFVSSNWEIHRAQIALQNLSSRNNILLRLFHGRGGSVGRGGGPAYQAILAQPSGTLKGRIKITEQGEVLASKYSLPELALYNLETVTTAVIQNSLVNNRLDATPEWNQLMSRLAETSRSHYRKLVHENPDLLNFFQEVTPIEEISKLQISSRPARRKKGAKDLSSLRAIPWVFGWTQSRFLLPSWFGVGTALSSELNSDPRQIELLRVLHQRWPFFRMLISKVEMTLSKVDLEVARYYVDTLGSRENKDSFDDIFEVISKEYNLTKSLILEITGKNKLLESDRDLKLSVSLRNKTIIPLGFLQVSLLRRLRDQTRQPPISEFIIDKDESRRAYSRSELLRGALLTINGIAAGMRNTG.

Catalysis depends on residues histidine 175 and lysine 630.

This sequence belongs to the PEPCase type 1 family. Mg(2+) serves as cofactor.

The enzyme catalyses oxaloacetate + phosphate = phosphoenolpyruvate + hydrogencarbonate. In terms of biological role, forms oxaloacetate, a four-carbon dicarboxylic acid source for the tricarboxylic acid cycle. The sequence is that of Phosphoenolpyruvate carboxylase from Prochlorococcus marinus (strain MIT 9215).